Consider the following 227-residue polypeptide: Cytochrome c oxidase subunit 2 (227 aa).

Residues 1–14 (MAHPLQLGLQDASS) are Mitochondrial intermembrane-facing. The chain crosses the membrane as a helical span at residues 15-45 (PIMEELLYFHDHALMIVFLISSLVLYTISLM). At 46 to 59 (LTTKLMHTSTMNAQ) the chain is on the mitochondrial matrix side. The helical transmembrane segment at 60 to 87 (MVETMWTILPAVILTSIALPSLRILYMT) threads the bilayer. Topologically, residues 88–227 (DEINNPLLTI…HFETWSTLTS (140 aa)) are mitochondrial intermembrane. Cu cation-binding residues include His161, Cys196, Glu198, Cys200, His204, and Met207. Glu198 contributes to the Mg(2+) binding site.

It belongs to the cytochrome c oxidase subunit 2 family. As to quaternary structure, component of the cytochrome c oxidase (complex IV, CIV), a multisubunit enzyme composed of 14 subunits. The complex is composed of a catalytic core of 3 subunits MT-CO1, MT-CO2 and MT-CO3, encoded in the mitochondrial DNA, and 11 supernumerary subunits COX4I, COX5A, COX5B, COX6A, COX6B, COX6C, COX7A, COX7B, COX7C, COX8 and NDUFA4, which are encoded in the nuclear genome. The complex exists as a monomer or a dimer and forms supercomplexes (SCs) in the inner mitochondrial membrane with NADH-ubiquinone oxidoreductase (complex I, CI) and ubiquinol-cytochrome c oxidoreductase (cytochrome b-c1 complex, complex III, CIII), resulting in different assemblies (supercomplex SCI(1)III(2)IV(1) and megacomplex MCI(2)III(2)IV(2)). Found in a complex with TMEM177, COA6, COX18, COX20, SCO1 and SCO2. Interacts with TMEM177 in a COX20-dependent manner. Interacts with COX20. Interacts with COX16. It depends on Cu cation as a cofactor.

It is found in the mitochondrion inner membrane. It carries out the reaction 4 Fe(II)-[cytochrome c] + O2 + 8 H(+)(in) = 4 Fe(III)-[cytochrome c] + 2 H2O + 4 H(+)(out). In terms of biological role, component of the cytochrome c oxidase, the last enzyme in the mitochondrial electron transport chain which drives oxidative phosphorylation. The respiratory chain contains 3 multisubunit complexes succinate dehydrogenase (complex II, CII), ubiquinol-cytochrome c oxidoreductase (cytochrome b-c1 complex, complex III, CIII) and cytochrome c oxidase (complex IV, CIV), that cooperate to transfer electrons derived from NADH and succinate to molecular oxygen, creating an electrochemical gradient over the inner membrane that drives transmembrane transport and the ATP synthase. Cytochrome c oxidase is the component of the respiratory chain that catalyzes the reduction of oxygen to water. Electrons originating from reduced cytochrome c in the intermembrane space (IMS) are transferred via the dinuclear copper A center (CU(A)) of subunit 2 and heme A of subunit 1 to the active site in subunit 1, a binuclear center (BNC) formed by heme A3 and copper B (CU(B)). The BNC reduces molecular oxygen to 2 water molecules using 4 electrons from cytochrome c in the IMS and 4 protons from the mitochondrial matrix. In Galeopterus variegatus (Malayan flying lemur), this protein is Cytochrome c oxidase subunit 2 (MT-CO2).